We begin with the raw amino-acid sequence, 326 residues long: Pyruvate dehydrogenase E1 component subunit alpha (326 aa).

In terms of assembly, heterodimer of an alpha and a beta chain. Thiamine diphosphate serves as cofactor.

It catalyses the reaction N(6)-[(R)-lipoyl]-L-lysyl-[protein] + pyruvate + H(+) = N(6)-[(R)-S(8)-acetyldihydrolipoyl]-L-lysyl-[protein] + CO2. Functionally, the pyruvate dehydrogenase complex catalyzes the overall conversion of pyruvate to acetyl-CoA and CO(2). It contains multiple copies of three enzymatic components: pyruvate dehydrogenase (E1), dihydrolipoamide acetyltransferase (E2) and lipoamide dehydrogenase (E3). This is Pyruvate dehydrogenase E1 component subunit alpha (pdhA) from Rickettsia bellii (strain RML369-C).